The sequence spans 128 residues: Small nuclear ribonucleoprotein SmD3a (128 aa).

Residues I7–L79 enclose the Sm domain. Positions G90 to R128 are disordered. Residues T112–G121 are compositionally biased toward gly residues.

This sequence belongs to the snRNP core protein family. As to expression, expressed in young seedlings, roots, leaves, flowers and immature siliques.

Its subcellular location is the cytoplasm. The protein resides in the cytosol. The protein localises to the nucleus. In terms of biological role, core component of the spliceosomal U1, U2, U4 and U5 small nuclear ribonucleoproteins (snRNPs), the building blocks of the spliceosome. May play a minor role in the splicing of cellular pre-mRNAs. The polypeptide is Small nuclear ribonucleoprotein SmD3a (Arabidopsis thaliana (Mouse-ear cress)).